We begin with the raw amino-acid sequence, 335 residues long: Ferredoxin--NADP reductase (335 aa).

Positions 35, 43, 48, 88, 122, 287, and 328 each coordinate FAD.

It belongs to the ferredoxin--NADP reductase type 2 family. In terms of assembly, homodimer. Requires FAD as cofactor.

It catalyses the reaction 2 reduced [2Fe-2S]-[ferredoxin] + NADP(+) + H(+) = 2 oxidized [2Fe-2S]-[ferredoxin] + NADPH. The sequence is that of Ferredoxin--NADP reductase from Thermus thermophilus (strain ATCC BAA-163 / DSM 7039 / HB27).